A 148-amino-acid chain; its full sequence is Large ribosomal subunit protein bL9 (148 aa).

The protein belongs to the bacterial ribosomal protein bL9 family.

In terms of biological role, binds to the 23S rRNA. This chain is Large ribosomal subunit protein bL9, found in Staphylococcus haemolyticus (strain JCSC1435).